The primary structure comprises 186 residues: HGPRTase-like protein 3 (186 aa).

It belongs to the purine/pyrimidine phosphoribosyltransferase family. Archaeal HPRT subfamily.

In terms of biological role, may catalyze a purine salvage reaction, the substrate is unknown. This is HGPRTase-like protein 3 from Haloterrigena turkmenica (strain ATCC 51198 / DSM 5511 / JCM 9101 / NCIMB 13204 / VKM B-1734 / 4k) (Halococcus turkmenicus).